Reading from the N-terminus, the 146-residue chain is Allograft inflammatory factor 1 (146 aa).

S1 is modified (N-acetylserine). Position 10 is an N6-acetyllysine (K10). The residue at position 38 (S38) is a Phosphoserine. The 36-residue stretch at 44–79 (RKLEAFKQKYMEFDLNGNGDIDIMSLKRMLEKLGVP) folds into the EF-hand 1 domain. Ca(2+) contacts are provided by D57, N59, N61, D63, and T99. The region spanning 81 to 115 (THLELKKLIKEVSSGSGETFSYSIFLKMMLGKRSA) is the EF-hand 2; degenerate domain. Positions 127-146 (AREQEKPTGPPAKKAISELP) are disordered.

As to quaternary structure, homodimer (Potential). Monomer. Interacts with LCP1. Microglial cells in the central nervous system and dendritic cells and macrophages in several organs.

Its subcellular location is the cytoplasm. The protein localises to the cytoskeleton. It localises to the cell projection. The protein resides in the ruffle membrane. It is found in the phagocytic cup. Actin-binding protein that enhances membrane ruffling and RAC activation. Enhances the actin-bundling activity of LCP1. Binds calcium. Plays a role in RAC signaling and in phagocytosis. May play a role in macrophage activation and function. Promotes the proliferation of vascular smooth muscle cells and of T-lymphocytes. Enhances lymphocyte migration. Plays a role in vascular inflammation. Has a dual influence on glucose-induced insulin secretion: inhibition at low concentration and stimulation at high concentrations. The sequence is that of Allograft inflammatory factor 1 (AIF1) from Sus scrofa (Pig).